Reading from the N-terminus, the 261-residue chain is MALNKNHSEGGGVIVNNTESILMSYDHVELTFNDMKNVPEAFKGTKKGTVYLTPYRVIFLSKGKDAMQSFMMPFYLMKDCEIKQPVFGANFIKGIVKAEAGGGWEGSASYKLTFTAGGAIEFGQRMLQVASQASRGEVPNGAYGYPYMPSGAYVFPPPVANGMYPCPPGYPYPPPPPEFYPGPPMMDGAMGYVQPPPPPYPGPMEPPVSGPSAPATPAAEAKAAEAAASAYYNPGNPHNVYMPTSQPPPPPYYPPEDKKTQ.

In terms of domain architecture, GRAM spans 1–84 (MALNKNHSEG…YLMKDCEIKQ (84 aa)). Tyr192 bears the Phosphotyrosine mark. The PPxY motif 1 motif lies at 196–200 (PPPPY). Residues 196-209 (PPPPYPGPMEPPVS) show a composition bias toward pro residues. A disordered region spans residues 196–261 (PPPPYPGPME…YYPPEDKKTQ (66 aa)). Residues 210–230 (GPSAPATPAAEAKAAEAAASA) are compositionally biased toward low complexity. The residue at position 231 (Tyr231) is a Phosphotyrosine. A compositionally biased stretch (pro residues) spans 245 to 254 (SQPPPPPYYP). The PPxY motif 2 signature appears at 248–252 (PPPPY).

As to quaternary structure, binds to the WW domain of YAP1, WWP1 and WWP2. Interacts with NEDD4. Interacts with ESR1 and UBE3A. In terms of processing, phosphorylated in repsonse to EGF as well as estrogen and progesterone hormones. Tyr-192 and Tyr-231 are phosphorylated by YES and SRC inducing nuclear translocation. In terms of tissue distribution, expressed in the ear and the eye. Isoform 1 is expressed in brain, inner ear and organ of Corti. Isoform 2 is only detected in brain.

It is found in the cytoplasm. The protein localises to the nucleus. Acts as a transcriptional coactivator of estrogen and progesterone receptors (ESR1 and PGR) upon hormone activation. In presence of estrogen, binds to ESR1-responsive promoters. Synergizes with YAP1 to enhance PGR activity. Modulates expression of post-synaptic scaffolding proteins via regulation of ESR1, ESR2 and PGR. This chain is WW domain-binding protein 2 (Wbp2), found in Mus musculus (Mouse).